The sequence spans 259 residues: Deoxyribose-phosphate aldolase (259 aa).

D102 acts as the Proton donor/acceptor in catalysis. K167 (schiff-base intermediate with acetaldehyde) is an active-site residue. The active-site Proton donor/acceptor is K201.

The protein belongs to the DeoC/FbaB aldolase family. DeoC type 2 subfamily.

It is found in the cytoplasm. It carries out the reaction 2-deoxy-D-ribose 5-phosphate = D-glyceraldehyde 3-phosphate + acetaldehyde. The protein operates within carbohydrate degradation; 2-deoxy-D-ribose 1-phosphate degradation; D-glyceraldehyde 3-phosphate and acetaldehyde from 2-deoxy-alpha-D-ribose 1-phosphate: step 2/2. Functionally, catalyzes a reversible aldol reaction between acetaldehyde and D-glyceraldehyde 3-phosphate to generate 2-deoxy-D-ribose 5-phosphate. This Escherichia fergusonii (strain ATCC 35469 / DSM 13698 / CCUG 18766 / IAM 14443 / JCM 21226 / LMG 7866 / NBRC 102419 / NCTC 12128 / CDC 0568-73) protein is Deoxyribose-phosphate aldolase.